A 440-amino-acid polypeptide reads, in one-letter code: Xaa-Pro dipeptidase (440 aa).

Mn(2+) contacts are provided by Asp-244, Asp-255, His-336, Glu-381, and Glu-420.

This sequence belongs to the peptidase M24B family. Bacterial-type prolidase subfamily. The cofactor is Mn(2+).

The catalysed reaction is Xaa-L-Pro dipeptide + H2O = an L-alpha-amino acid + L-proline. In terms of biological role, splits dipeptides with a prolyl residue in the C-terminal position. This Pseudoalteromonas translucida (strain TAC 125) protein is Xaa-Pro dipeptidase.